The following is a 1444-amino-acid chain: ABC transporter G family member 39 (1444 aa).

The interval 1 to 36 is disordered; the sequence is MDIVRMGSVASGGGSVRRTASSWRGTSGRSDAFGRS. Polar residues predominate over residues 19 to 29; it reads TASSWRGTSGR. The ABC transporter 1 domain maps to 154–426; that stretch reads LSAMRIVSSG…FEAMGFKCPE (273 aa). 187–194 is an ATP binding site; sequence GPPGSGKT. One can recognise an ABC transmembrane type-2 1 domain in the interval 504–717; the sequence is ELTKACFSRE…AQNAIAVNEF (214 aa). A run of 6 helical transmembrane segments spans residues 522 to 542, 555 to 575, 610 to 630, 642 to 662, 667 to 687, and 754 to 774; these read FVYI…MTVF, GAIF…NGFA, IPIS…VMGF, VLLV…AALG, VADT…GFLI, and IGVG…ILFL. One can recognise an ABC transporter 2 domain in the interval 846 to 1098; that stretch reads ITFDNIRYSV…HLINYFEGIQ (253 aa). 891–898 is an ATP binding site; the sequence is GVSGAGKT. One can recognise an ABC transmembrane type-2 2 domain in the interval 1171 to 1385; sequence TQCMACLWKQ…TLYGLVASQY (215 aa). Helical transmembrane passes span 1192–1212, 1220–1240, 1278–1298, 1305–1325, 1335–1355, 1362–1382, and 1414–1434; these read ATRI…FLNL, LDLF…GIQN, IPHI…LIGF, FFWY…YGMM, IAAI…GFLI, IWWR…GLVA, and LGYV…VFAF.

Belongs to the ABC transporter superfamily. ABCG family. PDR (TC 3.A.1.205) subfamily.

It localises to the membrane. Its function is as follows. May be a general defense protein. In Oryza sativa subsp. japonica (Rice), this protein is ABC transporter G family member 39.